Here is a 509-residue protein sequence, read N- to C-terminus: Protein Jade-1 (509 aa).

Residues 1 to 45 (MKRGRLPSSSEDSDDNGSLSTTWSQNSRSQHRRSSCSRPEDRKPS) form a disordered region. Positions 60 to 80 (DSYQLNPDEYYVLADPWRQEW) are interaction with KAT7/HBO1 and histones. Residues 80–188 (WEKGVQVPVS…EQRCYDNMNH (109 aa)) are interaction with histones. Serine 89 carries the phosphoserine modification. The residue at position 92 (threonine 92) is a Phosphothreonine. Lysine 114 participates in a covalent cross-link: Glycyl lysine isopeptide (Lys-Gly) (interchain with G-Cter in SUMO2). The segment at 203–253 (YVVCDVCQSPDGEDGNEMVFCDKCNICVHQACYGILKVPEGSWLCRTCALG) adopts a PHD-type 1 zinc-finger fold. Residues 255–289 (QPKCLLCPKKGGAMKPTRSGTKWVHVSCALWIPEV) form a C2HC pre-PHD-type zinc finger. A PHD-type 2 zinc finger spans residues 313-369 (LVCSLCNEKFGASIQCSVKNCRTAFHVTCAFDRGLEMKTILAENDEVKFKSYCPKHS). The tract at residues 373–399 (KAEEGLGEGTAQENGAPECSPRDPLEP) is disordered.

It belongs to the JADE family. Component of the HBO1 complex composed at least of ING4 or ING5, KAT7/HBO1, MEAF6, and one of JADE1, JADE2 and JADE3. Interacts with NPHP4.

It localises to the nucleus. The protein resides in the chromosome. It is found in the cytoplasm. The protein localises to the cytoskeleton. Its subcellular location is the cilium basal body. Scaffold subunit of some HBO1 complexes, which have a histone H4 acetyltransferase activity. Plays a key role in HBO1 complex by directing KAT7/HBO1 specificity towards histone H4 acetylation (H4K5ac, H4K8ac and H4K12ac), regulating DNA replication initiation, regulating DNA replication initiation. May also promote acetylation of nucleosomal histone H4 by KAT5. Promotes apoptosis. May act as a renal tumor suppressor. Negatively regulates canonical Wnt signaling; at least in part, cooperates with NPHP4 in this function. The protein is Protein Jade-1 (JADE1) of Bos taurus (Bovine).